Consider the following 188-residue polypeptide: HGPRTase-like protein 1 (188 aa).

It belongs to the purine/pyrimidine phosphoribosyltransferase family. Archaeal HPRT subfamily.

In terms of biological role, may catalyze a purine salvage reaction, the substrate is unknown. The protein is HGPRTase-like protein 1 of Haloferax volcanii (strain ATCC 29605 / DSM 3757 / JCM 8879 / NBRC 14742 / NCIMB 2012 / VKM B-1768 / DS2) (Halobacterium volcanii).